We begin with the raw amino-acid sequence, 418 residues long: MLHPRARTMLLLSLPAVAIGIASSLILIVVMKIASALQNLLWQRLPGTLGIAQDSPLWIIGVLTLTGIAVGLVIRFSQGHAGPDPACEPLIGAPVPPSALPGLIVALILGLAGGVSLGPEHPIMTVNIALAVAIGARLLPRVNRMEWTILASAGTIGALFGTPVAAALIFSQTLNGSSEVPLWDRLFAPLMAAAAGALTTGLFFHPHFSLPIAHYGQMEMTDILSGAIVAAIAIAAGMVAVWCLPRLHSMMHQMKNPVLVLGIGGFILGILGVIGGPVSLFKGLDEMQQMVANQAFSTSDYFLLAVIKLAALVVAAASGFRGGRIFPAVFVGVALGLMLHEHVPAVPAAITVSCAILGIVLVVTRDGWLSLFMAAVVVPNTTLLPLLCIVMLPAWLLLAGKPMMMVNRPKQQPPHDNV.

12 consecutive transmembrane segments (helical) span residues 10–30 (LLLS…LIVV), 54–74 (DSPL…GLVI), 99–119 (ALPG…SLGP), 120–140 (EHPI…RLLP), 149–169 (ILAS…AALI), 186–206 (LFAP…FFHP), 223–243 (ILSG…AVWC), 258–278 (VLVL…GGPV), 300–320 (DYFL…ASGF), 322–342 (GGRI…LHEH), 343–363 (VPAV…VLVV), and 371–391 (LFMA…CIVM).

Belongs to the chloride channel (TC 2.A.49) family.

It is found in the cell membrane. The sequence is that of Putative ion-transport protein YfeO from Escherichia coli (strain 55989 / EAEC).